We begin with the raw amino-acid sequence, 201 residues long: Large ribosomal subunit protein uL4 (201 aa).

Positions Lys-44 to Arg-68 are disordered.

The protein belongs to the universal ribosomal protein uL4 family. Part of the 50S ribosomal subunit.

Its function is as follows. One of the primary rRNA binding proteins, this protein initially binds near the 5'-end of the 23S rRNA. It is important during the early stages of 50S assembly. It makes multiple contacts with different domains of the 23S rRNA in the assembled 50S subunit and ribosome. In terms of biological role, forms part of the polypeptide exit tunnel. The chain is Large ribosomal subunit protein uL4 from Xanthomonas axonopodis pv. citri (strain 306).